The following is a 390-amino-acid chain: Bifunctional enzyme IspD/IspF (390 aa).

The 2-C-methyl-D-erythritol 4-phosphate cytidylyltransferase stretch occupies residues 1-229 (MAAGRGERAG…RQDHAVFPDI (229 aa)). Residues 230-390 (RTGNGYDVHS…TVIYPGEVPE (161 aa)) form a 2-C-methyl-D-erythritol 2,4-cyclodiphosphate synthase region. A divalent metal cation is bound by residues aspartate 236 and histidine 238. 4-CDP-2-C-methyl-D-erythritol 2-phosphate-binding positions include 236–238 (DVH) and 262–263 (HS). A divalent metal cation is bound at residue histidine 270. Residues 284-286 (DIG), 360-363 (TTNE), phenylalanine 367, and arginine 370 each bind 4-CDP-2-C-methyl-D-erythritol 2-phosphate.

It in the N-terminal section; belongs to the IspD/TarI cytidylyltransferase family. IspD subfamily. The protein in the C-terminal section; belongs to the IspF family. A divalent metal cation serves as cofactor.

The enzyme catalyses 2-C-methyl-D-erythritol 4-phosphate + CTP + H(+) = 4-CDP-2-C-methyl-D-erythritol + diphosphate. It carries out the reaction 4-CDP-2-C-methyl-D-erythritol 2-phosphate = 2-C-methyl-D-erythritol 2,4-cyclic diphosphate + CMP. Its pathway is isoprenoid biosynthesis; isopentenyl diphosphate biosynthesis via DXP pathway; isopentenyl diphosphate from 1-deoxy-D-xylulose 5-phosphate: step 2/6. It functions in the pathway isoprenoid biosynthesis; isopentenyl diphosphate biosynthesis via DXP pathway; isopentenyl diphosphate from 1-deoxy-D-xylulose 5-phosphate: step 4/6. Its function is as follows. Bifunctional enzyme that catalyzes the formation of 4-diphosphocytidyl-2-C-methyl-D-erythritol from CTP and 2-C-methyl-D-erythritol 4-phosphate (MEP) (IspD), and catalyzes the conversion of 4-diphosphocytidyl-2-C-methyl-D-erythritol 2-phosphate (CDP-ME2P) to 2-C-methyl-D-erythritol 2,4-cyclodiphosphate (ME-CPP) with a corresponding release of cytidine 5-monophosphate (CMP) (IspF). The protein is Bifunctional enzyme IspD/IspF of Brucella abortus biovar 1 (strain 9-941).